We begin with the raw amino-acid sequence, 356 residues long: Solute carrier family 25 member 3 (356 aa).

The transit peptide at 1 to 44 directs the protein to the mitochondrion; that stretch reads MFSSVAHLARANPFNAPHLQLVHDVSGPRSPPGPPRRSRHLAAA. Residues 45 to 57 lie on the Mitochondrial intermembrane side of the membrane; sequence AVEGYSCEFGSMK. Solcar repeat units follow at residues 57–141, 154–238, and 255–333; these read KYYA…FKAL, WRTS…TVEA, and EQLV…VKVY. The helical transmembrane segment at 58 to 80 threads the bilayer; that stretch reads YYALCGFGGVLSCGLTHTAVVPL. Topologically, residues 81–115 are mitochondrial matrix; the sequence is DLVKCRMQVDPQKYKGIFNGFSITLKEDGVRGLAK. Residue Lys-93 is modified to N6-acetyllysine. An N6-methyllysine modification is found at Lys-106. A helical membrane pass occupies residues 116–135; that stretch reads GWAPTLIGYSMQGLCKFGFY. At 136-155 the chain is on the mitochondrial intermembrane side; sequence EVFKALYSNILGEENTYLWR. The chain crosses the membrane as a helical span at residues 156–177; it reads TSLYLAASASAEFFADIALAPM. Over 178 to 212 the chain is Mitochondrial matrix; sequence EAAKVRIQTQPGYANTLREAVPKMYKEEGLNAFYK. Tyr-190 bears the Phosphotyrosine mark. Lys-203 bears the N6-acetyllysine mark. Residues 213–232 form a helical membrane-spanning segment; the sequence is GVAPVWMRQIPYTMMKFACF. Topologically, residues 233–255 are mitochondrial intermembrane; sequence ERTVEALYKFVVPKPRSECTKAE. Residues 256 to 278 form a helical membrane-spanning segment; that stretch reads QLVVTFVAGYIAGVFCAIVSHPA. At 279–308 the chain is on the mitochondrial matrix side; that stretch reads DSVVSVLNKEKGSTASQVLQRLGFRGVWKG. The helical transmembrane segment at 309–327 threads the bilayer; that stretch reads LFARIIMIGTLTALQWFIY. The Mitochondrial intermembrane segment spans residues 328–356; it reads DSVKVYFRLPRPPPPEMPESLKKKLGLTE.

Belongs to the mitochondrial carrier (TC 2.A.29) family. Interacts with PPIF; the interaction is impaired by CsA.

The protein localises to the mitochondrion inner membrane. It catalyses the reaction phosphate(in) + H(+)(in) = phosphate(out) + H(+)(out). Functionally, inorganic ion transporter that transports phosphate or copper ions across the mitochondrial inner membrane into the matrix compartment. Mediates proton-coupled symport of phosphate ions necessary for mitochondrial oxidative phosphorylation of ADP to ATP. Transports copper ions probably in the form of anionic copper(I) complexes to maintain mitochondrial matrix copper pool and to supply copper for cytochrome C oxidase complex assembly. May also play a role in regulation of the mitochondrial permeability transition pore (mPTP). This Rattus norvegicus (Rat) protein is Solute carrier family 25 member 3.